The following is a 328-amino-acid chain: MDAYERITRNAAEVVTEEEIEAMADDPDGKRAYVGYEPSGVLHIGHMLTANKLIDLQEAGFEVTVLLADVHAYLNDKGSFEEIRHTAERMRDQFIAYGLDESNTQFVLGSDFQLDDDYTLDLHSLELETTLARAERAMAEITSGDSVKVSQAVYPLMQALDIPYLGVDLAVGGMEQRKVHMLARDVLPSIDREPPTSLHTPLIADLGTGRGKMSSSEGVTISMEDSREDIESKVNDAYCPRTADPEPTDDGQSRENPVLQVFEYHVFPRFDTVVVERPEEYGGDLEYDSYDALEAELESGELHPADAKGALAEYLNRLIAPGREQLAE.

Position 33 (Y33) interacts with L-tyrosine. The 'HIGH' region signature appears at 38–46 (PSGVLHIGH). L-tyrosine-binding residues include Y154, Q158, D161, and Q176. A disordered region spans residues 193 to 227 (EPPTSLHTPLIADLGTGRGKMSSSEGVTISMEDSR). Residues 212 to 216 (KMSSS) carry the 'KMSKS' region motif. S215 serves as a coordination point for ATP.

This sequence belongs to the class-I aminoacyl-tRNA synthetase family. TyrS type 3 subfamily. As to quaternary structure, homodimer.

The protein localises to the cytoplasm. It catalyses the reaction tRNA(Tyr) + L-tyrosine + ATP = L-tyrosyl-tRNA(Tyr) + AMP + diphosphate + H(+). In terms of biological role, catalyzes the attachment of tyrosine to tRNA(Tyr) in a two-step reaction: tyrosine is first activated by ATP to form Tyr-AMP and then transferred to the acceptor end of tRNA(Tyr). In Halorubrum lacusprofundi (strain ATCC 49239 / DSM 5036 / JCM 8891 / ACAM 34), this protein is Tyrosine--tRNA ligase.